Reading from the N-terminus, the 750-residue chain is Nibrin (750 aa).

The FHA domain occupies 24–83; that stretch reads YIVGRKNCAILIENDQSISRNHAVLRVNFPVTSLSQTDEIPTLTIKDNSKYGTFINEEKM. BRCT domains follow at residues 105-181 and 224-315; these read KFRV…SEFL and GKTF…LAVI. The mediates interaction with SP100 stretch occupies residues 111-328; it reads EPLVVCSSCL…TESYCNPQGQ (218 aa). The tract at residues 221–403 is interaction with MTOR, MAPKAP1 and RICTOR; the sequence is IFKGKTFVFL…SRKLLQGTCN (183 aa). Position 337 is a phosphothreonine (T337). S343 carries the post-translational modification Phosphoserine; by ATM. 2 positions are modified to phosphoserine: S347 and S433. Disordered regions lie at residues 429 to 479 and 494 to 550; these read NYQL…SSCK and QPAG…RKRK. K436 participates in a covalent cross-link: Glycyl lysine isopeptide (Lys-Gly) (interchain with G-Cter in ubiquitin). Positions 446 to 457 are enriched in polar residues; it reads WSSQQQLNSIKN. Residues 461-467 carry the Nuclear localization signal motif; the sequence is PCSRKRE. The span at 502-514 shows a compositional bias: basic and acidic residues; it reads KSKDHESQSETLD. S508 and S517 each carry phosphoserine. K528 participates in a covalent cross-link: Glycyl lysine isopeptide (Lys-Gly) (interchain with G-Cter in SUMO2). Positions 540–550 are enriched in basic and acidic residues; that stretch reads STEDLRARKRK. Residues K569 and K580 each participate in a glycyl lysine isopeptide (Lys-Gly) (interchain with G-Cter in SUMO2) cross-link. Residues 581-599 are compositionally biased toward basic and acidic residues; the sequence is QEADVSIRKKPRMDAERNQ. Residues 581-622 are disordered; it reads QEADVSIRKKPRMDAERNQHLNGGPVPESNSALQEDETGKKD. Residues K683, K687, and K732 each participate in a glycyl lysine isopeptide (Lys-Gly) (interchain with G-Cter in ubiquitin) cross-link. The FxF/Y motif motif lies at 737-746; it reads ADDLFRYNPN.

The protein belongs to the Nibrin family. Component of the MRN complex composed of two heterodimers RAD50 and MRE11 associated with a single NBN. The MRN complexes dimerize on DNA to form joined MRN-MRN oligomers required for DNA double-strand break repair. The MRN complexes dimerize on DNA to form joined MRN-MRN oligomers required for DNA double-strand break repair. As part of the MRN complex, interacts with MCM9; the interaction recruits the complex to DNA repair sites. Component of the BASC complex, at least composed of BRCA1, MSH2, MSH6, MLH1, ATM, BLM, RAD50, MRE11 and NBN. Interacts with histone H2AX; this requires phosphorylation of H2AX on 'Ser-139' and promotes NBN recruitment to DNA damage sites. Interacts with (phosphorylated) MDC1; promoting NBN recruitment to DNA damage sites. Interacts with (phosphorylated) RAD17; promoting NBN recruitment to DNA damage sites. Interacts (via FxF/Y motif) with ATM. Interacts with HJURP. Interacts with INTS3. Interacts with KPNA2. Interacts with TERF2; interaction is disrupted upon NBN phosphorylation by CDK2. Interacts with (phosphorylated) RBBP8/CtIP; the interaction links the role of the MRN complex in DNA double-strand break sensing to resection. Interacts with SP100; recruits NBN to PML bodies. Interacts with ATF2. Interacts with MTOR, MAPKAP1 isoform 2 and RICTOR; indicative for an association with the mTORC2 complex. Interacts with MRNIP. Interacts with UFL1; promoting UFL1 recruitment to double-strand breaks following DNA damage. Interacts with CYREN (via XLF motif). In terms of processing, phosphorylated by ATM in response of ionizing radiation, and such phosphorylation is responsible intra-S phase checkpoint control and telomere maintenance. Phosphorylated at Ser-433 by CDK2 in S/G2 phases abolishes interaction with TERF2, enabling DCLRE1B/Apollo recruitment to telomeres. Phosphorylation at Ser-433 in response to dysfunctional telomeres promotes non-homologous end joining repair at telomeres, while dephosphorylation by PPP1CA promotes microhomology-mediated end-joining (MMEJ) repair. Post-translationally, ubiquitinated at Lys-436 via 'Lys-6'-linked ubiquitin chains by RNF8, promoting NBN recruitment to DNA double-strand breaks (DSBs). Ubiquitinated at Lys-687 via 'Lys-63'-linked ubiquitin chains by PELI1: ubiquitination takes place following PELI1 phosphorylation and promotes ATM activation and DNA repair. Ubiquitinated at Lys-732 via 'Lys-63'-linked ubiquitin chains by the SCF(SKP2) complex: ubiquitination takes place following SKP2 phosphorylation and promotes ATM activation and DNA repair. As to expression, present at approximately equal levels in the heart at fetal day 17, at relatively constant levels at postnatal days 10, 17 and 21 and at slightly lower levels in the adult heart. Barely detectable in the brain. Not detected in kidney, very low levels in liver and skeletal muscle and moderate levels in heart, lung and brain (at protein level).

Its subcellular location is the nucleus. It is found in the chromosome. The protein resides in the PML body. The protein localises to the telomere. Functionally, component of the MRN complex, which plays a central role in double-strand break (DSB) repair, DNA recombination, maintenance of telomere integrity and meiosis. The MRN complex is involved in the repair of DNA double-strand breaks (DSBs) via homologous recombination (HR), an error-free mechanism which primarily occurs during S and G2 phases. The complex (1) mediates the end resection of damaged DNA, which generates proper single-stranded DNA, a key initial steps in HR, and is (2) required for the recruitment of other repair factors and efficient activation of ATM and ATR upon DNA damage. The MRN complex possesses single-strand endonuclease activity and double-strand-specific 3'-5' exonuclease activity, which are provided by MRE11, to initiate end resection, which is required for single-strand invasion and recombination. Within the MRN complex, NBN acts as a protein-protein adapter, which specifically recognizes and binds phosphorylated proteins, promoting their recruitment to DNA damage sites. Recruits MRE11 and RAD50 components of the MRN complex to DSBs in response to DNA damage. Promotes the recruitment of PI3/PI4-kinase family members ATM, ATR, and probably DNA-PKcs to the DNA damage sites, activating their functions. Mediates the recruitment of phosphorylated RBBP8/CtIP to DSBs, leading to cooperation between the MRN complex and RBBP8/CtIP to initiate end resection. RBBP8/CtIP specifically promotes the endonuclease activity of the MRN complex to clear DNA ends containing protein adducts. The MRN complex is also required for the processing of R-loops. NBN also functions in telomere length maintenance via its interaction with TERF2: interaction with TERF2 during G1 phase preventing recruitment of DCLRE1B/Apollo to telomeres. NBN also promotes DNA repair choice at dysfunctional telomeres: NBN phosphorylation by CK2 promotes non-homologous end joining repair at telomeres, while unphosphorylated NBN promotes microhomology-mediated end-joining (MMEJ) repair. Enhances AKT1 phosphorylation possibly by association with the mTORC2 complex. The chain is Nibrin (Nbn) from Rattus norvegicus (Rat).